An 88-amino-acid polypeptide reads, in one-letter code: RNA-binding protein Hfq (88 aa).

A Sm domain is found at 10-70; it reads DRFLNILRTK…ISTILPAEYI (61 aa).

It belongs to the Hfq family. Homohexamer.

In terms of biological role, RNA chaperone that binds small regulatory RNA (sRNAs) and mRNAs to facilitate mRNA translational regulation in response to envelope stress, environmental stress and changes in metabolite concentrations. Also binds with high specificity to tRNAs. The polypeptide is RNA-binding protein Hfq (Fervidobacterium nodosum (strain ATCC 35602 / DSM 5306 / Rt17-B1)).